The sequence spans 273 residues: SPRY domain-containing SOCS box protein 1 (273 aa).

Phosphotyrosine is present on tyrosine 31. Residues 33–231 form the B30.2/SPRY domain; sequence KPTRLDLLLD…IRMRYLNGLD (199 aa). In terms of domain architecture, SOCS box spans 232-273; it reads PEPLPLMDLCRRSVRLALGKERLGAIPALPLPASLKAYLLYQ.

This sequence belongs to the SPSB family. As to quaternary structure, component of the probable ECS(SPSB1) E3 ubiquitin-protein ligase complex which contains CUL5, RNF7/RBX2, Elongin BC complex and SPSB1. Interacts with CUL5, RNF7, ELOB and ELOC. Directly interacts with MET tyrosine kinase domain in the presence and in the absence of HGF, however HGF treatment has a positive effect on this interaction. When phosphorylated, interacts with RASA1 without affecting its stability. Interacts (via B30.2/SPRY domain) with PAWR; this interaction is direct and occurs in association with the Elongin BC complex. Interacts with EPHB2. Interacts with NOS2.

It is found in the cytoplasm. Its subcellular location is the cytosol. It participates in protein modification; protein ubiquitination. Functionally, substrate recognition component of a SCF-like ECS (Elongin BC-CUL2/5-SOCS-box protein) E3 ubiquitin-protein ligase complex which mediates the ubiquitination and subsequent proteasomal degradation of target proteins. Negatively regulates nitric oxide (NO) production and limits cellular toxicity in activated macrophages by mediating the ubiquitination and proteasomal degradation of NOS2. Acts as a bridge which links the NOS2 with the ECS E3 ubiquitin ligase complex components ELOC and CUL5. In Mus musculus (Mouse), this protein is SPRY domain-containing SOCS box protein 1 (Spsb1).